A 344-amino-acid chain; its full sequence is Phosphoribosylformylglycinamidine cyclo-ligase (344 aa).

It belongs to the AIR synthase family.

It localises to the cytoplasm. It catalyses the reaction 2-formamido-N(1)-(5-O-phospho-beta-D-ribosyl)acetamidine + ATP = 5-amino-1-(5-phospho-beta-D-ribosyl)imidazole + ADP + phosphate + H(+). Its pathway is purine metabolism; IMP biosynthesis via de novo pathway; 5-amino-1-(5-phospho-D-ribosyl)imidazole from N(2)-formyl-N(1)-(5-phospho-D-ribosyl)glycinamide: step 2/2. This Haemophilus influenzae (strain PittGG) protein is Phosphoribosylformylglycinamidine cyclo-ligase.